Here is a 369-residue protein sequence, read N- to C-terminus: sn-glycerol-3-phosphate import ATP-binding protein UgpC 1 (369 aa).

The ABC transporter domain occupies 4 to 234 (ISIRGVKKNY…PVSRFVAGFV (231 aa)). Residue 36–43 (GPSGCGKS) coordinates ATP.

This sequence belongs to the ABC transporter superfamily. sn-glycerol-3-phosphate importer (TC 3.A.1.1.3) family. As to quaternary structure, the complex is composed of two ATP-binding proteins (UgpC), two transmembrane proteins (UgpA and UgpE) and a solute-binding protein (UgpB).

It is found in the cell inner membrane. The enzyme catalyses sn-glycerol 3-phosphate(out) + ATP + H2O = sn-glycerol 3-phosphate(in) + ADP + phosphate + H(+). Functionally, part of the ABC transporter complex UgpBAEC involved in sn-glycerol-3-phosphate (G3P) import. Responsible for energy coupling to the transport system. The chain is sn-glycerol-3-phosphate import ATP-binding protein UgpC 1 from Rhizobium johnstonii (strain DSM 114642 / LMG 32736 / 3841) (Rhizobium leguminosarum bv. viciae).